A 337-amino-acid chain; its full sequence is BRI1 kinase inhibitor 1 (337 aa).

Over residues 1-25 the composition is skewed to polar residues; it reads METNLQQVKNSSQTFSEKQNPKQEA. Disordered stretches follow at residues 1–38 and 51–72; these read METNLQQVKNSSQTFSEKQNPKQEASPSPISSTCSSPS and SSSSKHISPTLRSPSKTTSSYQ. Residues 26-38 show a composition bias toward low complexity; it reads SPSPISSTCSSPS. A Phosphotyrosine modification is found at tyrosine 211. Residues 270-310 form a disordered region; the sequence is SAPASMRTSPTNSGHLRVSTAGLSSSSGSTSSSSSDSTMEE. The segment covering 288–310 has biased composition (low complexity); that stretch reads STAGLSSSSGSTSSSSSDSTMEE.

In terms of assembly, interacts (via C-terminus) with BRI1 (via kinase domain). In terms of processing, phosphorylated on Tyr-211 in response to brassinosteroid perception, leading to its inactivation: once phosphorylated, displaced into the cytosol where it is inactive. As to expression, expressed in leaves, petioles, shoot apices, hypocotyls, roots and flowers.

It localises to the cell membrane. It is found in the cytoplasm. Functionally, negative regulator of brassinosteroid signaling. When associated to the membrane, limits the interaction of BRI1 with BAK1 by binding to the kinase-inactive form of BRI1. In Arabidopsis thaliana (Mouse-ear cress), this protein is BRI1 kinase inhibitor 1 (BKI1).